We begin with the raw amino-acid sequence, 559 residues long: Palmitoyltransferase AKR1 (559 aa).

ANK repeat units follow at residues Gln-8–Thr-38, Leu-42–Thr-71, and Glu-75–Ala-104. The next 3 helical transmembrane spans lie at Leu-148–Gly-168, Thr-192–Gly-212, and Leu-217–Gly-237. A DHHC domain is found at His-272–Ala-322. Cys-302 (S-palmitoyl cysteine intermediate) is an active-site residue. A run of 2 helical transmembrane segments spans residues Ala-316 to Phe-336 and Leu-373 to Tyr-393.

This sequence belongs to the DHHC palmitoyltransferase family. AKR/ZDHHC17 subfamily.

It localises to the early endosome membrane. The protein resides in the golgi apparatus membrane. The enzyme catalyses L-cysteinyl-[protein] + hexadecanoyl-CoA = S-hexadecanoyl-L-cysteinyl-[protein] + CoA. Palmitoyltransferase specific for casein kinase 1. The polypeptide is Palmitoyltransferase AKR1 (Mortierella alpina (Oleaginous fungus)).